An 802-amino-acid chain; its full sequence is E3 ubiquitin-protein ligase RNF10 (802 aa).

Composition is skewed to low complexity over residues 1–31 (MPQS…SGSS), 78–90 (SNQS…QKSK), and 104–113 (SKPFSSSSNG). The interval 1–134 (MPQSSPSTAA…AEFSPAQFSG (134 aa)) is disordered. The residue at position 5 (S5) is a Phosphoserine. S110 carries the phosphoserine modification. Over residues 114–124 (GRRDEVAEAQR) the composition is skewed to basic and acidic residues. The residue at position 128 (S128) is a Phosphoserine. The RING-type zinc-finger motif lies at 225–267 (CPICLYPPTAAKITRCGHIFCWACILHYLSLSERTWSKCPICY). Polar residues predominate over residues 645–654 (DSALGPTSTE). 3 disordered regions span residues 645-664 (DSAL…LSPL), 716-753 (DGWP…VPSF), and 767-802 (KLDT…VHTK). Over residues 716 to 728 (DGWPKAAPKKDDN) the composition is skewed to basic and acidic residues. Residues 793–802 (LFSTSVVHTK) show a composition bias toward polar residues.

Belongs to the RNF10 family. As to quaternary structure, interacts with MEOX2.

The protein resides in the cytoplasm. Its subcellular location is the nucleus. The enzyme catalyses S-ubiquitinyl-[E2 ubiquitin-conjugating enzyme]-L-cysteine + [acceptor protein]-L-lysine = [E2 ubiquitin-conjugating enzyme]-L-cysteine + N(6)-ubiquitinyl-[acceptor protein]-L-lysine.. It functions in the pathway protein modification; protein ubiquitination. Its function is as follows. E3 ubiquitin-protein ligase that catalyzes monoubiquitination of 40S ribosomal proteins RPS2/us5 and RPS3/us3 in response to ribosome stalling. Part of a ribosome quality control that takes place when ribosomes have stalled during translation initiation (iRQC): RNF10 acts by mediating monoubiquitination of RPS2/us5 and RPS3/us3, promoting their degradation by the proteasome. Also promotes ubiquitination of 40S ribosomal proteins in response to ribosome stalling during translation elongation. The action of RNF10 in iRQC is counteracted by USP10. May also act as a transcriptional factor involved in the regulation of MAG (Myelin-associated glycoprotein) expression. Acts as a regulator of Schwann cell differentiation and myelination. This chain is E3 ubiquitin-protein ligase RNF10, found in Rattus norvegicus (Rat).